The chain runs to 259 residues: MAPITDDVVAGLKSTIGKLEARIEDLESRLGGEPKPKSIAEHMRIILMGPPGAGKGTQAPKIKEKYCVCHLATGDMLRSQVAKKTDLGREAKKIMDQGGLVSDEIMVNMIKSELENNAECKNGFILDGFPRTVAQAERLDEMLVARNQKLQHAIELKIDDALLVARITGRLVHPASGRSYHKIFNPPKEAMKDDITGEPLVQRSDDNAEALKKRLVTYHAQTAPVCDYYKKTGIWRGIDASQEPGQVWKSLLGVFNNKN.

52–57 (GAGKGT) lines the ATP pocket. The segment at 72–101 (ATGDMLRSQVAKKTDLGREAKKIMDQGGLV) is NMP. AMP contacts are provided by residues Thr73, Arg78, 99-101 (GLV), 128-131 (GFPR), and Gln135. Residues 169–206 (GRLVHPASGRSYHKIFNPPKEAMKDDITGEPLVQRSDD) are LID. ATP-binding positions include Arg170 and 179-180 (SY). The AMP site is built by Arg203 and Arg214. Gln242 is a binding site for ATP.

It belongs to the adenylate kinase family. AK2 subfamily. As to quaternary structure, monomer.

It localises to the cytoplasm. It is found in the mitochondrion intermembrane space. It carries out the reaction AMP + ATP = 2 ADP. In terms of biological role, catalyzes the reversible transfer of the terminal phosphate group between ATP and AMP. Plays an important role in cellular energy homeostasis and in adenine nucleotide metabolism. Adenylate kinase activity is critical for regulation of the phosphate utilization and the AMP de novo biosynthesis pathways. The protein is Adenylate kinase (adk1) of Emericella nidulans (strain FGSC A4 / ATCC 38163 / CBS 112.46 / NRRL 194 / M139) (Aspergillus nidulans).